The following is a 272-amino-acid chain: MIYIGLPQWSHPKWVRLGITSLEEYARHFNCVEGNTTLYALPKPEVVLRWREQTTDDFRFCFKFPATISHQAALRHCDDLVTEFLTRMSPLAPRIGQYWLQLPATFGPRELPALWHFLDSLPGEFNYGVEVRHPQFFAKGEEEQTLNRGLHQRGVNQVILDSRPVHAARPHSEAIRDAQRKKPKVPVHAVLTATNPLIRFIGSDDMTQNRELFQVWLQKLAQWHQTTTPYLFLHTPDIAQAPELVHTLWEDLRKTLPEIGAVPAIPQQSSLF.

The protein belongs to the UPF0759 family.

In Escherichia coli O157:H7, this protein is UPF0759 protein YecE (yecE).